Reading from the N-terminus, the 1059-residue chain is Carbamoyl phosphate synthase large chain (1059 aa).

The carboxyphosphate synthetic domain stretch occupies residues 1 to 401 (MPKRKDIQKI…SLLKACRSLE (401 aa)). 12 residues coordinate ATP: Arg-129, Arg-169, Gly-175, Gly-176, Arg-208, Ile-210, Glu-215, Gly-241, Ile-242, His-243, Gln-284, and Glu-298. The ATP-grasp 1 domain occupies 133–327 (KQLMEELGQP…IAKLAAKIAV (195 aa)). Mg(2+) is bound by residues Gln-284, Glu-298, and Asn-300. Gln-284, Glu-298, and Asn-300 together coordinate Mn(2+). The oligomerization domain stretch occupies residues 402–546 (VCVDHNELPA…YSTYGFENES (145 aa)). The segment at 547–929 (VKSSKESVLV…ALYKAFEASY (383 aa)) is carbamoyl phosphate synthetic domain. Positions 671 to 861 (EQALKELDIP…MAQVATRLIL (191 aa)) constitute an ATP-grasp 2 domain. 10 residues coordinate ATP: Arg-707, Ser-746, Ile-748, Glu-752, Gly-777, Val-778, His-779, Ser-780, Gln-820, and Glu-832. The Mg(2+) site is built by Gln-820, Glu-832, and Asn-834. The Mn(2+) site is built by Gln-820, Glu-832, and Asn-834. Residues 930–1059 (LHLPNFGNIV…ESRSFTTEAI (130 aa)) form the MGS-like domain. The tract at residues 930-1059 (LHLPNFGNIV…ESRSFTTEAI (130 aa)) is allosteric domain.

Belongs to the CarB family. In terms of assembly, composed of two chains; the small (or glutamine) chain promotes the hydrolysis of glutamine to ammonia, which is used by the large (or ammonia) chain to synthesize carbamoyl phosphate. Tetramer of heterodimers (alpha,beta)4. It depends on Mg(2+) as a cofactor. Requires Mn(2+) as cofactor.

It carries out the reaction hydrogencarbonate + L-glutamine + 2 ATP + H2O = carbamoyl phosphate + L-glutamate + 2 ADP + phosphate + 2 H(+). The catalysed reaction is hydrogencarbonate + NH4(+) + 2 ATP = carbamoyl phosphate + 2 ADP + phosphate + 2 H(+). It participates in amino-acid biosynthesis; L-arginine biosynthesis; carbamoyl phosphate from bicarbonate: step 1/1. The protein operates within pyrimidine metabolism; UMP biosynthesis via de novo pathway; (S)-dihydroorotate from bicarbonate: step 1/3. In terms of biological role, large subunit of the glutamine-dependent carbamoyl phosphate synthetase (CPSase). CPSase catalyzes the formation of carbamoyl phosphate from the ammonia moiety of glutamine, carbonate, and phosphate donated by ATP, constituting the first step of 2 biosynthetic pathways, one leading to arginine and/or urea and the other to pyrimidine nucleotides. The large subunit (synthetase) binds the substrates ammonia (free or transferred from glutamine from the small subunit), hydrogencarbonate and ATP and carries out an ATP-coupled ligase reaction, activating hydrogencarbonate by forming carboxy phosphate which reacts with ammonia to form carbamoyl phosphate. The sequence is that of Carbamoyl phosphate synthase large chain from Streptococcus sanguinis (strain SK36).